A 233-amino-acid chain; its full sequence is Large ribosomal subunit protein uL1 (233 aa).

Belongs to the universal ribosomal protein uL1 family. As to quaternary structure, part of the 50S ribosomal subunit.

Its function is as follows. Binds directly to 23S rRNA. The L1 stalk is quite mobile in the ribosome, and is involved in E site tRNA release. Functionally, protein L1 is also a translational repressor protein, it controls the translation of the L11 operon by binding to its mRNA. The polypeptide is Large ribosomal subunit protein uL1 (Proteus vulgaris).